The sequence spans 390 residues: 1-deoxy-D-xylulose 5-phosphate reductoisomerase (390 aa).

NADPH contacts are provided by Thr-10, Gly-11, Ser-12, Ile-13, Gly-36, Arg-37, Asn-38, and Asn-121. Lys-122 serves as a coordination point for 1-deoxy-D-xylulose 5-phosphate. Glu-123 is an NADPH binding site. A Mn(2+)-binding site is contributed by Asp-147. 1-deoxy-D-xylulose 5-phosphate-binding residues include Ser-148, Glu-149, Ser-173, and His-196. Glu-149 is a binding site for Mn(2+). Gly-202 contacts NADPH. 1-deoxy-D-xylulose 5-phosphate-binding residues include Ser-209, Asn-214, Lys-215, and Glu-218. Glu-218 is a Mn(2+) binding site. The interval 367-390 (AASEHGRREAEKRVGARAHAPAGR) is disordered. The segment covering 370–380 (EHGRREAEKRV) has biased composition (basic and acidic residues).

It belongs to the DXR family. Mg(2+) is required as a cofactor. The cofactor is Mn(2+).

It catalyses the reaction 2-C-methyl-D-erythritol 4-phosphate + NADP(+) = 1-deoxy-D-xylulose 5-phosphate + NADPH + H(+). The protein operates within isoprenoid biosynthesis; isopentenyl diphosphate biosynthesis via DXP pathway; isopentenyl diphosphate from 1-deoxy-D-xylulose 5-phosphate: step 1/6. Its function is as follows. Catalyzes the NADPH-dependent rearrangement and reduction of 1-deoxy-D-xylulose-5-phosphate (DXP) to 2-C-methyl-D-erythritol 4-phosphate (MEP). In Anaeromyxobacter sp. (strain K), this protein is 1-deoxy-D-xylulose 5-phosphate reductoisomerase.